Reading from the N-terminus, the 403-residue chain is Casein kinase I isoform delta-A (403 aa).

Residues 9-277 (YRLGRKIGSG…YLRQLFRNLF (269 aa)) form the Protein kinase domain. ATP-binding positions include 15–23 (IGSGSFGDI) and lysine 38. The Proton acceptor role is filled by aspartate 128. The segment at 315-340 (QGRIPLPRVMLPTSSGRPRGTQEVAP) is autoinhibitory. The disordered stretch occupies residues 322-403 (RVMLPTSSGR…PSGLQSAVPR (82 aa)).

It belongs to the protein kinase superfamily. In terms of assembly, monomer. Interacts with per1 and per2. Component of the circadian core oscillator. In terms of processing, autophosphorylated on serine and threonine residues.

It localises to the cytoplasm. The protein resides in the nucleus. It carries out the reaction L-seryl-[protein] + ATP = O-phospho-L-seryl-[protein] + ADP + H(+). The enzyme catalyses L-threonyl-[protein] + ATP = O-phospho-L-threonyl-[protein] + ADP + H(+). Its activity is regulated as follows. Exhibits substrate-dependent heparin activation. Its function is as follows. Casein kinases are operationally defined by their preferential utilization of acidic proteins such as caseins as substrates. Central component of the circadian clock. May act as a negative regulator of circadian rhythmicity by phosphorylating per1 and per2, which may lead to their degradation. Participates in wnt signaling. This chain is Casein kinase I isoform delta-A (csnk1da), found in Danio rerio (Zebrafish).